The chain runs to 276 residues: Undecaprenyl-diphosphatase 1 (276 aa).

7 helical membrane-spanning segments follow: residues 4–24 (ILIC…FLPV), 45–62 (KTFD…VCWE), 83–103 (FTLN…LFEK), 108–128 (VLFS…IILW), 187–207 (VATE…TLYE), 217–237 (VDSL…AFVC), and 252–272 (VFAW…YSGW).

This sequence belongs to the UppP family.

Its subcellular location is the cell inner membrane. The catalysed reaction is di-trans,octa-cis-undecaprenyl diphosphate + H2O = di-trans,octa-cis-undecaprenyl phosphate + phosphate + H(+). Catalyzes the dephosphorylation of undecaprenyl diphosphate (UPP). Confers resistance to bacitracin. The polypeptide is Undecaprenyl-diphosphatase 1 (Burkholderia ambifaria (strain ATCC BAA-244 / DSM 16087 / CCUG 44356 / LMG 19182 / AMMD) (Burkholderia cepacia (strain AMMD))).